We begin with the raw amino-acid sequence, 336 residues long: Glucokinase (336 aa).

12–17 (ADIGGT) provides a ligand contact to ATP.

Belongs to the bacterial glucokinase family.

Its subcellular location is the cytoplasm. The catalysed reaction is D-glucose + ATP = D-glucose 6-phosphate + ADP + H(+). This Helicobacter pylori (strain J99 / ATCC 700824) (Campylobacter pylori J99) protein is Glucokinase.